Reading from the N-terminus, the 244-residue chain is 5-oxoprolinase subunit A (244 aa).

It belongs to the LamB/PxpA family. As to quaternary structure, forms a complex composed of PxpA, PxpB and PxpC.

The catalysed reaction is 5-oxo-L-proline + ATP + 2 H2O = L-glutamate + ADP + phosphate + H(+). Its function is as follows. Catalyzes the cleavage of 5-oxoproline to form L-glutamate coupled to the hydrolysis of ATP to ADP and inorganic phosphate. The chain is 5-oxoprolinase subunit A from Escherichia coli O139:H28 (strain E24377A / ETEC).